A 337-amino-acid polypeptide reads, in one-letter code: Transcription initiation factor IIB (337 aa).

The segment at 36-68 (SVQSVCPECGSRQLVHDYERAELVCQNCGLVLD) adopts a TFIIB-type zinc-finger fold. Residues Cys41, Cys44, Cys60, and Cys63 each contribute to the Zn(2+) site. 2 consecutive repeat copies span residues 154–237 (SELD…SREL) and 248–329 (DYVP…ELAE).

This sequence belongs to the TFIIB family.

In terms of biological role, stabilizes TBP binding to an archaeal box-A promoter. Also responsible for recruiting RNA polymerase II to the pre-initiation complex (DNA-TBP-TFIIB). The protein is Transcription initiation factor IIB of Methanoculleus marisnigri (strain ATCC 35101 / DSM 1498 / JR1).